We begin with the raw amino-acid sequence, 261 residues long: MASVKSRVFAITGGASGIGAATSRLLAERGATAVCVGDISCKNFDELKESMKKINPATEVHCSLLDVTSPTEVEKWVKSIVAKFGNLHGAANIAGIAQGAGLRNSPTILEEGDEEWSKVLKVNLDGVFYCTRAEVRAMKSLPSDDRSIVNVGSIAALSHIPDVYAYGTSKGASTYFTTCVAADTFPFGIRVNSVSPGITDTPLLPQFIPKAKTSDEVKEVYRKEGFSVVKAGDVARTIVWLLSEDSSPVYGANINVGASMP.

Residues 1-20 form the signal peptide; that stretch reads MASVKSRVFAITGGASGIGA. NADP(+) is bound by residues I18, K48, D66, R132, Y166, K170, and T201. Y166 acts as the Proton acceptor in catalysis. K170 serves as the catalytic Lowers pKa of active site Tyr.

Belongs to the short-chain dehydrogenases/reductases (SDR) family.

It participates in alkaloid biosynthesis; ergot alkaloid biosynthesis. In terms of biological role, chanoclavine-I dehydrogenase; part of the gene cluster that mediates the biosynthesis of isofumigaclavines, fungal ergot alkaloids. The tryptophan dimethylallyltransferase ifgA catalyzes the first step of ergot alkaloid biosynthesis by condensing dimethylallyl diphosphate (DMAP) and tryptophan to form 4-dimethylallyl-L-tryptophan. The second step is catalyzed by the methyltransferase ifgB that methylates 4-dimethylallyl-L-tryptophan in the presence of S-adenosyl-L-methionine, resulting in the formation of N-methyl-dimethylallyl-L-tryptophan. The catalase ifgD and the FAD-dependent oxidoreductase ifgC then transform N-methyl-dimethylallyl-L-tryptophan to chanoclavine-I which is further oxidized by ifgE in the presence of NAD(+), resulting in the formation of chanoclavine-I aldehyde. The chanoclavine-I aldehyde reductases ifgG and/or fgaOx3 reduce chanoclavine-I aldehyde to dihydrochanoclavine-I aldehyde that spontaneously dehydrates to form 6,8-dimethyl-6,7-didehydroergoline. The festuclavine dehydrogenases ifgF1 and/or ifgF2 then catalyze the reduction of 6,8-dimethyl-6,7-didehydroergoline to form festuclavine. Hydrolysis of festuclavine by a yet undetermined cytochrome P450 monooxygenase (called ifgH) then leads to the formation of isofumigaclavine B which is in turn acetylated by ifgI to isofumigaclavine A. Penicillium roqueforti has interestingly at least two sets of genes for the consumption of chanoclavine-I aldehyde on three different loci, the OYEs ifgG/fgaOx3 and the festuclavine synthase homologs ifgF1/ifgF2. The reason for the duplication of these genes is unclear, probably to ensure the conversion of chanoclavine-I aldehyde by differential gene expression under various environmental conditions. This chain is Chanoclavine-I dehydrogenase ifgE, found in Penicillium roqueforti (strain FM164).